We begin with the raw amino-acid sequence, 91 residues long: DNA-directed RNA polymerase subunit omega (91 aa).

The protein belongs to the RNA polymerase subunit omega family. As to quaternary structure, the RNAP catalytic core consists of 2 alpha, 1 beta, 1 beta' and 1 omega subunit. When a sigma factor is associated with the core the holoenzyme is formed, which can initiate transcription.

It catalyses the reaction RNA(n) + a ribonucleoside 5'-triphosphate = RNA(n+1) + diphosphate. Its function is as follows. Promotes RNA polymerase assembly. Latches the N- and C-terminal regions of the beta' subunit thereby facilitating its interaction with the beta and alpha subunits. This chain is DNA-directed RNA polymerase subunit omega, found in Pectobacterium atrosepticum (strain SCRI 1043 / ATCC BAA-672) (Erwinia carotovora subsp. atroseptica).